A 48-amino-acid chain; its full sequence is Sperm protamine P1 (48 aa).

Belongs to the protamine P1 family. As to expression, testis.

The protein localises to the nucleus. The protein resides in the chromosome. Functionally, protamines substitute for histones in the chromatin of sperm during the haploid phase of spermatogenesis. They compact sperm DNA into a highly condensed, stable and inactive complex. The chain is Sperm protamine P1 (PRM1) from Murina cyclotis (Round-eared tube-nosed bat).